Reading from the N-terminus, the 562-residue chain is Dihydroxy-acid dehydratase 1 (562 aa).

Asp-80 contacts Mg(2+). [2Fe-2S] cluster is bound at residue Cys-121. Mg(2+) contacts are provided by Asp-122 and Lys-123. Lys-123 bears the N6-carboxylysine mark. Residue Cys-194 coordinates [2Fe-2S] cluster. Glu-446 contributes to the Mg(2+) binding site. Ser-472 serves as the catalytic Proton acceptor.

Belongs to the IlvD/Edd family. In terms of assembly, homodimer. [2Fe-2S] cluster serves as cofactor. Requires Mg(2+) as cofactor.

The catalysed reaction is (2R)-2,3-dihydroxy-3-methylbutanoate = 3-methyl-2-oxobutanoate + H2O. It carries out the reaction (2R,3R)-2,3-dihydroxy-3-methylpentanoate = (S)-3-methyl-2-oxopentanoate + H2O. It functions in the pathway amino-acid biosynthesis; L-isoleucine biosynthesis; L-isoleucine from 2-oxobutanoate: step 3/4. Its pathway is amino-acid biosynthesis; L-valine biosynthesis; L-valine from pyruvate: step 3/4. In terms of biological role, functions in the biosynthesis of branched-chain amino acids. Catalyzes the dehydration of (2R,3R)-2,3-dihydroxy-3-methylpentanoate (2,3-dihydroxy-3-methylvalerate) into 2-oxo-3-methylpentanoate (2-oxo-3-methylvalerate) and of (2R)-2,3-dihydroxy-3-methylbutanoate (2,3-dihydroxyisovalerate) into 2-oxo-3-methylbutanoate (2-oxoisovalerate), the penultimate precursor to L-isoleucine and L-valine, respectively. The sequence is that of Dihydroxy-acid dehydratase 1 from Staphylococcus saprophyticus subsp. saprophyticus (strain ATCC 15305 / DSM 20229 / NCIMB 8711 / NCTC 7292 / S-41).